The following is a 439-amino-acid chain: tRNA(Ile)-lysidine synthase (439 aa).

23–28 (SGGLDS) lines the ATP pocket.

It belongs to the tRNA(Ile)-lysidine synthase family.

It is found in the cytoplasm. The enzyme catalyses cytidine(34) in tRNA(Ile2) + L-lysine + ATP = lysidine(34) in tRNA(Ile2) + AMP + diphosphate + H(+). Functionally, ligates lysine onto the cytidine present at position 34 of the AUA codon-specific tRNA(Ile) that contains the anticodon CAU, in an ATP-dependent manner. Cytidine is converted to lysidine, thus changing the amino acid specificity of the tRNA from methionine to isoleucine. The chain is tRNA(Ile)-lysidine synthase from Methylococcus capsulatus (strain ATCC 33009 / NCIMB 11132 / Bath).